The following is a 214-amino-acid chain: 3,4-dihydroxy-2-butanone 4-phosphate synthase (214 aa).

Residues 37 to 38, aspartate 42, 150 to 154, and glutamate 174 each bind D-ribulose 5-phosphate; these read RE and RPGHT. Glutamate 38 provides a ligand contact to Mg(2+). Residue histidine 153 coordinates Mg(2+).

This sequence belongs to the DHBP synthase family. Homodimer. Mg(2+) serves as cofactor. Mn(2+) is required as a cofactor.

The catalysed reaction is D-ribulose 5-phosphate = (2S)-2-hydroxy-3-oxobutyl phosphate + formate + H(+). It participates in cofactor biosynthesis; riboflavin biosynthesis; 2-hydroxy-3-oxobutyl phosphate from D-ribulose 5-phosphate: step 1/1. In terms of biological role, catalyzes the conversion of D-ribulose 5-phosphate to formate and 3,4-dihydroxy-2-butanone 4-phosphate. This is 3,4-dihydroxy-2-butanone 4-phosphate synthase from Mannheimia succiniciproducens (strain KCTC 0769BP / MBEL55E).